Here is a 143-residue protein sequence, read N- to C-terminus: 3-hydroxyacyl-[acyl-carrier-protein] dehydratase FabZ (143 aa).

Residue histidine 48 is part of the active site.

This sequence belongs to the thioester dehydratase family. FabZ subfamily.

It localises to the cytoplasm. The catalysed reaction is a (3R)-hydroxyacyl-[ACP] = a (2E)-enoyl-[ACP] + H2O. Its function is as follows. Involved in unsaturated fatty acids biosynthesis. Catalyzes the dehydration of short chain beta-hydroxyacyl-ACPs and long chain saturated and unsaturated beta-hydroxyacyl-ACPs. This is 3-hydroxyacyl-[acyl-carrier-protein] dehydratase FabZ from Roseiflexus sp. (strain RS-1).